The primary structure comprises 729 residues: E3 ubiquitin-protein ligase Trim36 (729 aa).

An RING-type; degenerate zinc finger spans residues 33 to 84 (CPACKELFTHPLILPCQHSVCHKCVKELLLSLDDSFNDVASDSSNQSSPRLR). 2 B box-type zinc fingers span residues 154–192 (AIMC…WGTV) and 207–249 (PKVL…VTTM). Zn(2+)-binding residues include cysteine 212, histidine 215, cysteine 235, and histidine 241. A coiled-coil region spans residues 271–302 (ESQVKSQISELNLLMKETECNGERAKEEALAH). Residues 356–413 (LKETDQSCFVQTAKQLHLRIQKATESLKSFRPAAQASFEDYVVNISKQTEVLGELSFF) enclose the COS domain. A Fibronectin type-III domain is found at 416–511 (GIDIPEINEE…RELILHTPPA (96 aa)). Residues 509-723 (PPAPVFSFLF…LEEAITAKYL (215 aa)) enclose the B30.2/SPRY domain. Residues 606 to 626 (RDAASPRYEQDSGHDSGSEDA) form a disordered region. Residues 613–622 (YEQDSGHDSG) are compositionally biased toward basic and acidic residues.

Belongs to the TRIM/RBCC family. In terms of assembly, interacts with CENPH. As to expression, expressed in testis. Strongly expressed in the neural tube region in 14.5 dpc embryos.

It localises to the cytoplasm. Its subcellular location is the cytoplasmic vesicle. The protein resides in the secretory vesicle. It is found in the acrosome. The protein localises to the cytoskeleton. It catalyses the reaction S-ubiquitinyl-[E2 ubiquitin-conjugating enzyme]-L-cysteine + [acceptor protein]-L-lysine = [E2 ubiquitin-conjugating enzyme]-L-cysteine + N(6)-ubiquitinyl-[acceptor protein]-L-lysine.. Functionally, E3 ubiquitin-protein ligase which mediates ubiquitination and subsequent proteasomal degradation of target proteins. Involved in chromosome segregation and cell cycle regulation. May play a role in the acrosome reaction and fertilization. This Mus musculus (Mouse) protein is E3 ubiquitin-protein ligase Trim36 (Trim36).